The chain runs to 335 residues: Acetyl-coenzyme A carboxylase carboxyl transferase subunit alpha (335 aa).

Positions 48–308 (VLESKVDALR…KSLLVEELRM (261 aa)) constitute a CoA carboxyltransferase C-terminal domain.

Belongs to the AccA family. As to quaternary structure, acetyl-CoA carboxylase is a heterohexamer composed of biotin carboxyl carrier protein (AccB), biotin carboxylase (AccC) and two subunits each of ACCase subunit alpha (AccA) and ACCase subunit beta (AccD).

It localises to the cytoplasm. It carries out the reaction N(6)-carboxybiotinyl-L-lysyl-[protein] + acetyl-CoA = N(6)-biotinyl-L-lysyl-[protein] + malonyl-CoA. The protein operates within lipid metabolism; malonyl-CoA biosynthesis; malonyl-CoA from acetyl-CoA: step 1/1. Functionally, component of the acetyl coenzyme A carboxylase (ACC) complex. First, biotin carboxylase catalyzes the carboxylation of biotin on its carrier protein (BCCP) and then the CO(2) group is transferred by the carboxyltransferase to acetyl-CoA to form malonyl-CoA. This is Acetyl-coenzyme A carboxylase carboxyl transferase subunit alpha from Chlorobium phaeobacteroides (strain BS1).